Reading from the N-terminus, the 213-residue chain is 3,4-dihydroxy-2-butanone 4-phosphate synthase (213 aa).

Residues R37–E38, D42, R150–T154, and E174 contribute to the D-ribulose 5-phosphate site. A Mg(2+)-binding site is contributed by E38. A Mg(2+)-binding site is contributed by H153.

This sequence belongs to the DHBP synthase family. Homodimer. Mg(2+) is required as a cofactor. The cofactor is Mn(2+).

The catalysed reaction is D-ribulose 5-phosphate = (2S)-2-hydroxy-3-oxobutyl phosphate + formate + H(+). It functions in the pathway cofactor biosynthesis; riboflavin biosynthesis; 2-hydroxy-3-oxobutyl phosphate from D-ribulose 5-phosphate: step 1/1. Catalyzes the conversion of D-ribulose 5-phosphate to formate and 3,4-dihydroxy-2-butanone 4-phosphate. In Clostridium botulinum (strain ATCC 19397 / Type A), this protein is 3,4-dihydroxy-2-butanone 4-phosphate synthase.